The chain runs to 435 residues: Histidinol dehydrogenase (435 aa).

Residues Tyr-131, Gln-189, and Asn-212 each contribute to the NAD(+) site. Positions 238, 260, and 263 each coordinate substrate. The Zn(2+) site is built by Gln-260 and His-263. Residues Glu-327 and His-328 each act as proton acceptor in the active site. Substrate-binding residues include His-328, Asp-361, Glu-415, and His-420. Asp-361 provides a ligand contact to Zn(2+). A Zn(2+)-binding site is contributed by His-420.

This sequence belongs to the histidinol dehydrogenase family. Homodimer. Zn(2+) is required as a cofactor.

The enzyme catalyses L-histidinol + 2 NAD(+) + H2O = L-histidine + 2 NADH + 3 H(+). The protein operates within amino-acid biosynthesis; L-histidine biosynthesis; L-histidine from 5-phospho-alpha-D-ribose 1-diphosphate: step 9/9. Functionally, catalyzes the sequential NAD-dependent oxidations of L-histidinol to L-histidinaldehyde and then to L-histidine. This chain is Histidinol dehydrogenase (hisD), found in Buchnera aphidicola subsp. Acyrthosiphon pisum (strain APS) (Acyrthosiphon pisum symbiotic bacterium).